The chain runs to 378 residues: Cobalt-precorrin-5B C(1)-methyltransferase (378 aa).

The protein belongs to the CbiD family.

It carries out the reaction Co-precorrin-5B + S-adenosyl-L-methionine = Co-precorrin-6A + S-adenosyl-L-homocysteine. The protein operates within cofactor biosynthesis; adenosylcobalamin biosynthesis; cob(II)yrinate a,c-diamide from sirohydrochlorin (anaerobic route): step 6/10. Functionally, catalyzes the methylation of C-1 in cobalt-precorrin-5B to form cobalt-precorrin-6A. This Methanococcus aeolicus (strain ATCC BAA-1280 / DSM 17508 / OCM 812 / Nankai-3) protein is Cobalt-precorrin-5B C(1)-methyltransferase.